Reading from the N-terminus, the 451-residue chain is Midnolin-B (451 aa).

The region spanning 20–94 (MNLNIQSTTG…LTLLPSVEAG (75 aa)) is the Ubiquitin-like domain. Disordered stretches follow at residues 187–254 (ASCT…RSRK), 331–372 (RNAK…QTEN), and 388–427 (QKRL…EGSL). 3 stretches are compositionally biased toward low complexity: residues 190–205 (TPGS…TSST), 237–250 (STRG…SPSS), and 336–347 (TSPQSTGPQQTT). Basic and acidic residues predominate over residues 363 to 372 (SGDRLRQTEN). Residues 388 to 397 (QKRLRRKARR) show a composition bias toward basic residues. Residues 413-426 (RTSSNSSTSSGEGS) show a composition bias toward low complexity.

Its subcellular location is the nucleus. It is found in the cytoplasm. The protein localises to the cytosol. The protein resides in the nucleolus. Functionally, facilitates ubiquitin-independent proteasomal degradation of polycomb protein CBX4. Plays a role in inhibiting the activity of glucokinase GCK and both glucose-induced and basal insulin secretion. This Xenopus laevis (African clawed frog) protein is Midnolin-B (midn-b).